A 264-amino-acid polypeptide reads, in one-letter code: Putative HTH-type transcriptional regulator TrmBL2 (264 aa).

The segment at residues 33–54 (LTPAELASVSEVPAPRTYDVLR) is a DNA-binding region (H-T-H motif).

This sequence belongs to the transcriptional regulator TrmB family.

In terms of biological role, binds to the maltodextrin transport gene cluster (mdxE operon) promoter and to some other TGM (Thermococcales-Glycolytic-Motif) sequences, but not exclusively. This Pyrococcus furiosus (strain ATCC 43587 / DSM 3638 / JCM 8422 / Vc1) protein is Putative HTH-type transcriptional regulator TrmBL2 (trmBL2).